The chain runs to 440 residues: Transposon Ty1-LR4 Gag polyprotein (440 aa).

Composition is skewed to polar residues over residues 1–10, 48–60, and 127–152; these read MESQQLSQHP, TKAN…TPAS, and QSQF…GNTF. Disordered stretches follow at residues 1 to 93, 126 to 173, and 352 to 440; these read MESQ…MMTQ, PQSQ…RPPP, and GSRN…PGTY. The segment covering 153 to 165 has biased composition (low complexity); it reads TDSSSADSDMTST. The RNA-binding stretch occupies residues 299–401; that stretch reads NNGIHINNKV…NSKSKTARAH (103 aa). Low complexity predominate over residues 402-418; the sequence is NVSTSNNSPSTDNDSIS. Serine 416 carries the post-translational modification Phosphoserine. The segment covering 419–428 has biased composition (polar residues); the sequence is KSTTEPIQLN. Residues 429–440 are compositionally biased toward basic and acidic residues; sequence NKHDLHLRPGTY.

Homotrimer.

It is found in the cytoplasm. In terms of biological role, capsid protein (CA) is the structural component of the virus-like particle (VLP), forming the shell that encapsulates the retrotransposons dimeric RNA genome. The particles are assembled from trimer-clustered units and there are holes in the capsid shells that allow for the diffusion of macromolecules. CA also has nucleocapsid-like chaperone activity, promoting primer tRNA(i)-Met annealing to the multipartite primer-binding site (PBS), dimerization of Ty1 RNA and initiation of reverse transcription. The polypeptide is Transposon Ty1-LR4 Gag polyprotein (TY1A-LR4) (Saccharomyces cerevisiae (strain ATCC 204508 / S288c) (Baker's yeast)).